The sequence spans 359 residues: Photosystem II protein D1 3 (359 aa).

3 consecutive transmembrane segments (helical) span residues tyrosine 29–isoleucine 46, histidine 118–leucine 133, and tryptophan 142–alanine 156. Histidine 118 contacts chlorophyll a. Tyrosine 126 lines the pheophytin a pocket. 2 residues coordinate [CaMn4O5] cluster: aspartate 170 and glutamate 189. The chain crosses the membrane as a helical span at residues phenylalanine 197–leucine 218. A chlorophyll a-binding site is contributed by histidine 198. A quinone-binding positions include histidine 215 and serine 264–phenylalanine 265. Histidine 215 contributes to the Fe cation binding site. Histidine 272 is a binding site for Fe cation. A helical membrane pass occupies residues phenylalanine 274–leucine 288. Residues histidine 332, glutamate 333, aspartate 342, and alanine 344 each contribute to the [CaMn4O5] cluster site. Residues alanine 345 to glycine 359 constitute a propeptide that is removed on maturation.

It belongs to the reaction center PufL/M/PsbA/D family. PSII is composed of 1 copy each of membrane proteins PsbA, PsbB, PsbC, PsbD, PsbE, PsbF, PsbH, PsbI, PsbJ, PsbK, PsbL, PsbM, PsbT, PsbX, PsbY, PsbZ, Psb30/Ycf12, peripheral proteins PsbO, CyanoQ (PsbQ), PsbU, PsbV and a large number of cofactors. It forms dimeric complexes. The D1/D2 heterodimer binds P680, chlorophylls that are the primary electron donor of PSII, and subsequent electron acceptors. It shares a non-heme iron and each subunit binds pheophytin, quinone, additional chlorophylls, carotenoids and lipids. D1 provides most of the ligands for the Mn4-Ca-O5 cluster of the oxygen-evolving complex (OEC). There is also a Cl(-1) ion associated with D1 and D2, which is required for oxygen evolution. The PSII complex binds additional chlorophylls, carotenoids and specific lipids. serves as cofactor. In terms of processing, tyr-161 forms a radical intermediate that is referred to as redox-active TyrZ, YZ or Y-Z. C-terminally processed by CtpA; processing is essential to allow assembly of the oxygen-evolving complex and thus photosynthetic growth.

It is found in the cellular thylakoid membrane. It catalyses the reaction 2 a plastoquinone + 4 hnu + 2 H2O = 2 a plastoquinol + O2. Photosystem II (PSII) is a light-driven water:plastoquinone oxidoreductase that uses light energy to abstract electrons from H(2)O, generating O(2) and a proton gradient subsequently used for ATP formation. It consists of a core antenna complex that captures photons, and an electron transfer chain that converts photonic excitation into a charge separation. The D1/D2 (PsbA/PsbD) reaction center heterodimer binds P680, the primary electron donor of PSII as well as several subsequent electron acceptors. This chain is Photosystem II protein D1 3, found in Parasynechococcus marenigrum (strain WH8102).